A 159-amino-acid chain; its full sequence is Urease accessory protein UreE (159 aa).

Belongs to the UreE family.

The protein resides in the cytoplasm. Its function is as follows. Involved in urease metallocenter assembly. Binds nickel. Probably functions as a nickel donor during metallocenter assembly. The sequence is that of Urease accessory protein UreE from Vibrio parahaemolyticus.